We begin with the raw amino-acid sequence, 356 residues long: Nicotinate-nucleotide--dimethylbenzimidazole phosphoribosyltransferase (356 aa).

Glu-317 functions as the Proton acceptor in the catalytic mechanism.

The protein belongs to the CobT family. In terms of assembly, homodimer.

The catalysed reaction is 5,6-dimethylbenzimidazole + nicotinate beta-D-ribonucleotide = alpha-ribazole 5'-phosphate + nicotinate + H(+). It functions in the pathway nucleoside biosynthesis; alpha-ribazole biosynthesis; alpha-ribazole from 5,6-dimethylbenzimidazole: step 1/2. Catalyzes the synthesis of alpha-ribazole-5'-phosphate from nicotinate mononucleotide (NAMN) and 5,6-dimethylbenzimidazole (DMB). The sequence is that of Nicotinate-nucleotide--dimethylbenzimidazole phosphoribosyltransferase from Salmonella paratyphi A (strain ATCC 9150 / SARB42).